The following is a 181-amino-acid chain: Small ribosomal subunit protein uS4 (181 aa).

In terms of domain architecture, S4 RNA-binding spans 108–180 (RRLQTIVYRK…GERQRIMNQR (73 aa)).

The protein belongs to the universal ribosomal protein uS4 family. Part of the 30S ribosomal subunit. Contacts protein S5. The interaction surface between S4 and S5 is involved in control of translational fidelity.

Its function is as follows. One of the primary rRNA binding proteins, it binds directly to 16S rRNA where it nucleates assembly of the body of the 30S subunit. Functionally, with S5 and S12 plays an important role in translational accuracy. The chain is Small ribosomal subunit protein uS4 from Methanocorpusculum labreanum (strain ATCC 43576 / DSM 4855 / Z).